The primary structure comprises 389 residues: Succinate--CoA ligase [ADP-forming] subunit beta (389 aa).

In terms of domain architecture, ATP-grasp spans 9–236; that stretch reads KELFASHGVP…KDAEDPLEAK (228 aa). ATP contacts are provided by residues K45, 52–54, S94, and E99; that span reads GRG. Mg(2+)-binding residues include N191 and D205. Substrate is bound by residues N256 and 318 to 320; that span reads GIT.

It belongs to the succinate/malate CoA ligase beta subunit family. In terms of assembly, heterotetramer of two alpha and two beta subunits. Mg(2+) serves as cofactor.

It carries out the reaction succinate + ATP + CoA = succinyl-CoA + ADP + phosphate. It catalyses the reaction GTP + succinate + CoA = succinyl-CoA + GDP + phosphate. Its pathway is carbohydrate metabolism; tricarboxylic acid cycle; succinate from succinyl-CoA (ligase route): step 1/1. Its function is as follows. Succinyl-CoA synthetase functions in the citric acid cycle (TCA), coupling the hydrolysis of succinyl-CoA to the synthesis of either ATP or GTP and thus represents the only step of substrate-level phosphorylation in the TCA. The beta subunit provides nucleotide specificity of the enzyme and binds the substrate succinate, while the binding sites for coenzyme A and phosphate are found in the alpha subunit. The sequence is that of Succinate--CoA ligase [ADP-forming] subunit beta from Saccharopolyspora erythraea (strain ATCC 11635 / DSM 40517 / JCM 4748 / NBRC 13426 / NCIMB 8594 / NRRL 2338).